The sequence spans 233 residues: Sugar fermentation stimulation protein homolog (233 aa).

It belongs to the SfsA family.

The chain is Sugar fermentation stimulation protein homolog from Acetivibrio thermocellus (strain ATCC 27405 / DSM 1237 / JCM 9322 / NBRC 103400 / NCIMB 10682 / NRRL B-4536 / VPI 7372) (Clostridium thermocellum).